A 103-amino-acid polypeptide reads, in one-letter code: Large ribosomal subunit protein bL21 (103 aa).

It belongs to the bacterial ribosomal protein bL21 family. As to quaternary structure, part of the 50S ribosomal subunit. Contacts protein L20.

In terms of biological role, this protein binds to 23S rRNA in the presence of protein L20. The protein is Large ribosomal subunit protein bL21 of Cupriavidus metallidurans (strain ATCC 43123 / DSM 2839 / NBRC 102507 / CH34) (Ralstonia metallidurans).